The sequence spans 370 residues: D-alanine--D-alanine ligase (370 aa).

The region spanning Lys-144–Asp-352 is the ATP-grasp domain. Glu-177–Glu-232 contacts ATP. 3 residues coordinate Mg(2+): Asp-306, Glu-319, and Asn-321.

This sequence belongs to the D-alanine--D-alanine ligase family. Mg(2+) is required as a cofactor. Mn(2+) serves as cofactor.

The protein resides in the cytoplasm. The catalysed reaction is 2 D-alanine + ATP = D-alanyl-D-alanine + ADP + phosphate + H(+). Its pathway is cell wall biogenesis; peptidoglycan biosynthesis. Its function is as follows. Cell wall formation. The protein is D-alanine--D-alanine ligase of Listeria welshimeri serovar 6b (strain ATCC 35897 / DSM 20650 / CCUG 15529 / CIP 8149 / NCTC 11857 / SLCC 5334 / V8).